The following is a 239-amino-acid chain: Probable 2-phosphosulfolactate phosphatase (239 aa).

Belongs to the ComB family. Mg(2+) serves as cofactor.

It carries out the reaction (2R)-O-phospho-3-sulfolactate + H2O = (2R)-3-sulfolactate + phosphate. The chain is Probable 2-phosphosulfolactate phosphatase from Clostridium botulinum (strain Kyoto / Type A2).